The primary structure comprises 201 residues: Potassium-transporting ATPase KdpC subunit (201 aa).

The helical transmembrane segment at 12 to 34 (LLALTMITGLAYPLAVTGLATVL) threads the bilayer. A disordered region spans residues 69–102 (RPSATVAPDPADSSKTVSAPYNAANSGGSNLGPT). The segment covering 81–101 (SSKTVSAPYNAANSGGSNLGP) has biased composition (polar residues).

Belongs to the KdpC family. In terms of assembly, the system is composed of three essential subunits: KdpA, KdpB and KdpC.

It is found in the cell inner membrane. Its function is as follows. Part of the high-affinity ATP-driven potassium transport (or Kdp) system, which catalyzes the hydrolysis of ATP coupled with the electrogenic transport of potassium into the cytoplasm. This subunit acts as a catalytic chaperone that increases the ATP-binding affinity of the ATP-hydrolyzing subunit KdpB by the formation of a transient KdpB/KdpC/ATP ternary complex. This chain is Potassium-transporting ATPase KdpC subunit, found in Rhodopseudomonas palustris (strain TIE-1).